The primary structure comprises 477 residues: Inositol phosphosphingolipids phospholipase C (477 aa).

Over M1–H398 the chain is Cytoplasmic. E100 is a binding site for Mg(2+). The active-site Proton acceptor is the H334. The chain crosses the membrane as a helical span at residues F399–A417. Over N418–S424 the chain is Mitochondrial intermembrane. A helical transmembrane segment spans residues I425 to G449. Residues R450–K477 are Cytoplasmic-facing.

This sequence belongs to the neutral sphingomyelinase family. Requires Mg(2+) as cofactor.

The protein localises to the endoplasmic reticulum membrane. It is found in the mitochondrion outer membrane. It catalyses the reaction an N-acyl-(4R)-4-hydroxysphinganine-1-phosphoinositol + H2O = 1D-myo-inositol 1-phosphate + an N-acyl-(4R)-4-hydroxysphinganine + H(+). The enzyme catalyses a mannosylinositol-1-phospho-N-acyl-sphingoid base + H2O = mannosylinositol-1-phosphate + an N-acyl-sphingoid base + H(+). The catalysed reaction is an inositol phosphomannosylinositol-1-phospho-N-acyl-(4R)-4-hydroxysphinganine + H2O = mannosyldiinositol-1-phosphate + an N-acyl-(4R)-4-hydroxysphinganine + H(+). It functions in the pathway lipid metabolism; sphingolipid metabolism. Its activity is regulated as follows. Activated through localization to mitochondria in specific growth phases. Its function is as follows. Responsible for the hydrolysis of the phosphosphingolipids (IPS), inositol phosphorylceramide (IPC), mannosylinositol phosphorylceramide (MIPC), and mannosyldiinositol phosphorylceramide (M(IP)2C). Regulates sphingolipid metabolism in mitochondria, especially the formation of alpha-hydroxylated very long chain phytoceramides. The generated ceramides contribute to the normal function of mitochondria. Also active on sphingomyelin (SM), but this activity is probably not physiologically relevant. The protein is Inositol phosphosphingolipids phospholipase C of Saccharomyces cerevisiae (strain ATCC 204508 / S288c) (Baker's yeast).